A 145-amino-acid chain; its full sequence is Transcriptional regulator MraZ (145 aa).

SpoVT-AbrB domains are found at residues 5–49 and 78–121; these read TYNH…LESE and TYKV…AKEV.

This sequence belongs to the MraZ family. In terms of assembly, forms oligomers.

It localises to the cytoplasm. The protein localises to the nucleoid. The polypeptide is Transcriptional regulator MraZ (Ureaplasma urealyticum serovar 10 (strain ATCC 33699 / Western)).